A 107-amino-acid chain; its full sequence is Large ribosomal subunit protein bL21 (107 aa).

Belongs to the bacterial ribosomal protein bL21 family. Part of the 50S ribosomal subunit. Contacts protein L20.

In terms of biological role, this protein binds to 23S rRNA in the presence of protein L20. The polypeptide is Large ribosomal subunit protein bL21 (Chlamydia trachomatis serovar L2 (strain ATCC VR-902B / DSM 19102 / 434/Bu)).